Reading from the N-terminus, the 652-residue chain is ATP-dependent zinc metalloprotease FtsH (652 aa).

Over 1 to 11 the chain is Cytoplasmic; sequence MKKQNNGLIKN. The chain crosses the membrane as a helical span at residues 12 to 32; it reads PFLWLLFIFFLVTGFQYFYSG. Over 33–131 the chain is Extracellular; the sequence is NNSGGSQQIN…EVTVKHESSS (99 aa). A helical transmembrane segment spans residues 132-152; sequence GIWINLLVSIVPFGILFFFLF. The Cytoplasmic segment spans residues 153 to 652; the sequence is SMMGNMGGGN…EVKSKMNDEK (500 aa). 227–234 serves as a coordination point for ATP; it reads GPPGTGKT. His449 lines the Zn(2+) pocket. Residue Glu450 is part of the active site. 2 residues coordinate Zn(2+): His453 and Asp525. The tract at residues 628-652 is disordered; it reads MPEAVEEESHALSYDEVKSKMNDEK. Positions 634–652 are enriched in basic and acidic residues; sequence EESHALSYDEVKSKMNDEK.

The protein in the central section; belongs to the AAA ATPase family. In the C-terminal section; belongs to the peptidase M41 family. In terms of assembly, homohexamer. Zn(2+) serves as cofactor.

It localises to the cell membrane. Its function is as follows. Acts as a processive, ATP-dependent zinc metallopeptidase for both cytoplasmic and membrane proteins. Plays a role in the quality control of integral membrane proteins. The chain is ATP-dependent zinc metalloprotease FtsH from Streptococcus pneumoniae serotype 4 (strain ATCC BAA-334 / TIGR4).